The chain runs to 257 residues: Protein orai-2 (257 aa).

The next 4 helical transmembrane spans lie at 67-84 (TSAL…EVQL), 95-115 (LIAF…ALLI), 149-169 (LAWG…VVLL), and 199-219 (AALV…VFTI).

This sequence belongs to the Orai family.

The protein resides in the membrane. Functionally, ca(2+) release-activated Ca(2+)-like (CRAC-like) channel subunit which mediates Ca(2+) influx and increase in Ca(2+)-selective current by synergy with the Ca(2+) sensor, STIM1. The protein is Protein orai-2 (ORAI2) of Gallus gallus (Chicken).